Reading from the N-terminus, the 926-residue chain is Protein translocase subunit SecA (926 aa).

Residues glutamine 87, 105-109, and aspartate 512 each bind ATP; that span reads GEGKT. 4 residues coordinate Zn(2+): cysteine 911, cysteine 913, cysteine 922, and histidine 923.

This sequence belongs to the SecA family. As to quaternary structure, monomer and homodimer. Part of the essential Sec protein translocation apparatus which comprises SecA, SecYEG and auxiliary proteins SecDF-YajC and YidC. Zn(2+) is required as a cofactor.

Its subcellular location is the cell inner membrane. The protein resides in the cytoplasm. It carries out the reaction ATP + H2O + cellular proteinSide 1 = ADP + phosphate + cellular proteinSide 2.. Its function is as follows. Part of the Sec protein translocase complex. Interacts with the SecYEG preprotein conducting channel. Has a central role in coupling the hydrolysis of ATP to the transfer of proteins into and across the cell membrane, serving both as a receptor for the preprotein-SecB complex and as an ATP-driven molecular motor driving the stepwise translocation of polypeptide chains across the membrane. The sequence is that of Protein translocase subunit SecA from Psychrobacter cryohalolentis (strain ATCC BAA-1226 / DSM 17306 / VKM B-2378 / K5).